A 69-amino-acid chain; its full sequence is MSNRQNGTVKWFNDAKGFGFITPESGNDLFVHFRSIQGTGFKSLQEGQKVSFVVVNGQKGLQADEVQVV.

The region spanning 7 to 66 (GTVKWFNDAKGFGFITPESGNDLFVHFRSIQGTGFKSLQEGQKVSFVVVNGQKGLQADEV) is the CSD domain.

Its subcellular location is the cytoplasm. This is Major cold shock protein CspA (cspA) from Pseudomonas aeruginosa (strain ATCC 15692 / DSM 22644 / CIP 104116 / JCM 14847 / LMG 12228 / 1C / PRS 101 / PAO1).